The sequence spans 352 residues: Phosphoribosylformylglycinamidine cyclo-ligase (352 aa).

The protein belongs to the AIR synthase family.

The protein localises to the cytoplasm. It carries out the reaction 2-formamido-N(1)-(5-O-phospho-beta-D-ribosyl)acetamidine + ATP = 5-amino-1-(5-phospho-beta-D-ribosyl)imidazole + ADP + phosphate + H(+). It participates in purine metabolism; IMP biosynthesis via de novo pathway; 5-amino-1-(5-phospho-D-ribosyl)imidazole from N(2)-formyl-N(1)-(5-phospho-D-ribosyl)glycinamide: step 2/2. The sequence is that of Phosphoribosylformylglycinamidine cyclo-ligase from Pseudomonas savastanoi pv. phaseolicola (strain 1448A / Race 6) (Pseudomonas syringae pv. phaseolicola (strain 1448A / Race 6)).